The following is a 187-amino-acid chain: Threonylcarbamoyl-AMP synthase (187 aa).

The region spanning 3–187 (NSELLKIIWA…LLNGYLYRKR (185 aa)) is the YrdC-like domain.

It belongs to the SUA5 family. TsaC subfamily.

It localises to the cytoplasm. It carries out the reaction L-threonine + hydrogencarbonate + ATP = L-threonylcarbamoyladenylate + diphosphate + H2O. Required for the formation of a threonylcarbamoyl group on adenosine at position 37 (t(6)A37) in tRNAs that read codons beginning with adenine. Catalyzes the conversion of L-threonine, HCO(3)(-)/CO(2) and ATP to give threonylcarbamoyl-AMP (TC-AMP) as the acyladenylate intermediate, with the release of diphosphate. This is Threonylcarbamoyl-AMP synthase from Riesia pediculicola (strain USDA).